We begin with the raw amino-acid sequence, 203 residues long: MALTLYVASSNAGKLRDFRVAAGHTATEILPLPGLAEIDAPEETGTTFAENARLKAEFYSRCRPGGLVLADDSGLEVRALGLLPGVRSARFAEDAEYLPGSPLSADERNNLLLMDRMRGVEDRAGRYVCVLSVARDGVEIASAEGEVAGEILGVPQGTGGFGYDPLFYLPELEKTMAEIDLETKLRLSHRGAALRVLLARLPG.

9-14 contributes to the substrate binding site; the sequence is SSNAGK. Glu-42 and Asp-72 together coordinate Mg(2+). The Proton acceptor role is filled by Asp-72. Residues Ser-73, 161–164, Lys-184, and 189–190 each bind substrate; these read FGYD and HR.

This sequence belongs to the HAM1 NTPase family. In terms of assembly, homodimer. The cofactor is Mg(2+).

It carries out the reaction XTP + H2O = XMP + diphosphate + H(+). It catalyses the reaction dITP + H2O = dIMP + diphosphate + H(+). The enzyme catalyses ITP + H2O = IMP + diphosphate + H(+). Pyrophosphatase that catalyzes the hydrolysis of nucleoside triphosphates to their monophosphate derivatives, with a high preference for the non-canonical purine nucleotides XTP (xanthosine triphosphate), dITP (deoxyinosine triphosphate) and ITP. Seems to function as a house-cleaning enzyme that removes non-canonical purine nucleotides from the nucleotide pool, thus preventing their incorporation into DNA/RNA and avoiding chromosomal lesions. This is dITP/XTP pyrophosphatase from Acidobacterium capsulatum (strain ATCC 51196 / DSM 11244 / BCRC 80197 / JCM 7670 / NBRC 15755 / NCIMB 13165 / 161).